A 125-amino-acid polypeptide reads, in one-letter code: UPF0734 protein DDB_G0273871/DDB_G0273177 (125 aa).

Belongs to the UPF0734 family.

This chain is UPF0734 protein DDB_G0273871/DDB_G0273177, found in Dictyostelium discoideum (Social amoeba).